The chain runs to 88 residues: Small ribosomal subunit protein uS17 (88 aa).

This sequence belongs to the universal ribosomal protein uS17 family. As to quaternary structure, part of the 30S ribosomal subunit.

Its function is as follows. One of the primary rRNA binding proteins, it binds specifically to the 5'-end of 16S ribosomal RNA. The protein is Small ribosomal subunit protein uS17 of Methylorubrum extorquens (strain PA1) (Methylobacterium extorquens).